The primary structure comprises 324 residues: Transcription factor MYB74 (324 aa).

2 HTH myb-type domains span residues 10-62 (KNGL…TNYL) and 63-117 (RPDI…RKRL). 2 DNA-binding regions (H-T-H motif) span residues 38 to 62 (WRTLPKNAGLQRCGKSCRLRWTNYL) and 90 to 113 (WSAIAARLPGRTDNEIKNYWNTHI).

As to expression, highly expressed in flowers and at lower levels in rosette leaves and cauline leaves. Expressed at low levels in roots, stems and siliques.

The protein resides in the nucleus. Functionally, probable transcription factor that may function in salt stress response. The polypeptide is Transcription factor MYB74 (Arabidopsis thaliana (Mouse-ear cress)).